The sequence spans 295 residues: NAD kinase (295 aa).

The Proton acceptor role is filled by Asp-72. Residues 72–73 (DG), 146–147 (ND), Arg-157, Lys-174, Asp-176, 187–192 (TAYALS), and Gln-247 each bind NAD(+).

It belongs to the NAD kinase family. A divalent metal cation serves as cofactor.

The protein localises to the cytoplasm. The catalysed reaction is NAD(+) + ATP = ADP + NADP(+) + H(+). In terms of biological role, involved in the regulation of the intracellular balance of NAD and NADP, and is a key enzyme in the biosynthesis of NADP. Catalyzes specifically the phosphorylation on 2'-hydroxyl of the adenosine moiety of NAD to yield NADP. The sequence is that of NAD kinase from Pseudomonas aeruginosa (strain LESB58).